A 231-amino-acid polypeptide reads, in one-letter code: Homeobox protein EMX1 (231 aa).

The homeobox DNA-binding region spans 133–192 (PKRIRTAFSPSQLLRLERAFEKNHYVVGAERKQLANSLSLSETQVKVWFQNRRTKYKRQK). The disordered stretch occupies residues 193-231 (LEEEGPECTQKKKGNHHINRWRIATKQTGSEDIDVMSDA). Basic residues predominate over residues 203 to 212 (KKKGNHHINR).

The protein belongs to the EMX homeobox family.

Its subcellular location is the nucleus. Functionally, may function in combinations with OTX1/2 to specify cell fates in the developing central nervous system. The polypeptide is Homeobox protein EMX1 (emx1) (Danio rerio (Zebrafish)).